The primary structure comprises 230 residues: N-(5'-phosphoribosyl)anthranilate isomerase (230 aa).

The protein belongs to the TrpF family.

The enzyme catalyses N-(5-phospho-beta-D-ribosyl)anthranilate = 1-(2-carboxyphenylamino)-1-deoxy-D-ribulose 5-phosphate. Its pathway is amino-acid biosynthesis; L-tryptophan biosynthesis; L-tryptophan from chorismate: step 3/5. The sequence is that of N-(5'-phosphoribosyl)anthranilate isomerase from Syntrophus aciditrophicus (strain SB).